A 239-amino-acid polypeptide reads, in one-letter code: MQYFDLMKKACDSVGMEFNEDKYQKFMLYKDLLKEWNEKINLTAITEDEEIVKKHFIDCIKAFKADEFKKAKTVIDVGTGAGFPGLPIAIMREDVEVTLLDSLNKRINFLNEVVNKLALKNVETIHSRAEDGARKKELRENFDIATSRAVANMCVLSEFCIPYVKVNGNFIALKGPNITEELNDSKNAIGTLGGKLKGITEVEIEGTDLNHNLVIVDKIKSTPKTFPRKAGNVTKKPLK.

Residues Gly-78, Phe-83, 129 to 130 (AE), and Arg-148 each bind S-adenosyl-L-methionine.

The protein belongs to the methyltransferase superfamily. RNA methyltransferase RsmG family.

Its subcellular location is the cytoplasm. Its function is as follows. Specifically methylates the N7 position of a guanine in 16S rRNA. In Clostridium perfringens (strain SM101 / Type A), this protein is Ribosomal RNA small subunit methyltransferase G.